Consider the following 712-residue polypeptide: Ribosome-releasing factor 2, mitochondrial (712 aa).

Residues 1–28 (MQYSLLSAQLRCSRFLLRQQAPFINRCY) constitute a mitochondrion transit peptide. Residues 30–309 (DDIRNIGILA…AVNAYLPTPN (280 aa)) enclose the tr-type G domain. Residues 39-46 (AHIDAGKT), 103-107 (DTPGH), and 157-160 (NKMD) contribute to the GTP site.

Belongs to the TRAFAC class translation factor GTPase superfamily. Classic translation factor GTPase family. EF-G/EF-2 subfamily.

It is found in the mitochondrion. Functionally, mitochondrial GTPase that mediates the disassembly of ribosomes from messenger RNA at the termination of mitochondrial protein biosynthesis. Not involved in the GTP-dependent ribosomal translocation step during translation elongation. The polypeptide is Ribosome-releasing factor 2, mitochondrial (Drosophila virilis (Fruit fly)).